The primary structure comprises 127 residues: Holo-[acyl-carrier-protein] synthase (127 aa).

The Mg(2+) site is built by aspartate 8 and glutamate 56.

It belongs to the P-Pant transferase superfamily. AcpS family. The cofactor is Mg(2+).

It localises to the cytoplasm. It catalyses the reaction apo-[ACP] + CoA = holo-[ACP] + adenosine 3',5'-bisphosphate + H(+). Its function is as follows. Transfers the 4'-phosphopantetheine moiety from coenzyme A to a Ser of acyl-carrier-protein. The polypeptide is Holo-[acyl-carrier-protein] synthase (Deinococcus deserti (strain DSM 17065 / CIP 109153 / LMG 22923 / VCD115)).